Consider the following 297-residue polypeptide: Formylmethanofuran--tetrahydromethanopterin formyltransferase (297 aa).

The protein belongs to the FTR family. As to quaternary structure, homotetramer.

Its subcellular location is the cytoplasm. It catalyses the reaction N-formylmethanofuran + 5,6,7,8-tetrahydromethanopterin + H(+) = N(5)-formyl-5,6,7,8-tetrahydromethanopterin + methanofuran. It participates in one-carbon metabolism; methanogenesis from CO(2); 5,10-methenyl-5,6,7,8-tetrahydromethanopterin from CO(2): step 2/3. In terms of biological role, catalyzes the reversible transfer of a formyl group from formylmethanofuran (formyl-MFR) to tetrahydromethanopterin (H(4)MPT) to produce 5-formyl tetrahydromethanopterin (5-formyl-H(4)MPT) and methanofuran (MFR). The polypeptide is Formylmethanofuran--tetrahydromethanopterin formyltransferase (Methanosarcina acetivorans (strain ATCC 35395 / DSM 2834 / JCM 12185 / C2A)).